A 437-amino-acid chain; its full sequence is O-methyltransferase elcB (437 aa).

S-adenosyl-L-methionine is bound at residue D269. Catalysis depends on H319, which acts as the Proton acceptor.

It belongs to the class I-like SAM-binding methyltransferase superfamily. Cation-independent O-methyltransferase family. COMT subfamily.

It functions in the pathway secondary metabolite biosynthesis. Functionally, O-methyltransferase; part of the gene cluster that mediates the biosynthesis of elsinochrome C, a perelyenequinone phytotoxin structurally similar to cercosporin. The first step of elsinochrome C biosynthesis is performed by the polyketide synthase elcA which catalyzes the formation of nor-toralactone. The starter unit acyltransferase (SAT) domain of elcA initiates polyketide extension by the selective utilization of acetyl-CoA, which is elongated to the heptaketide in the beta-ketoacyl synthase (KS) domain by successive condensations with six malonyl units introduced by the malonyl acyltransferase (MAT) domain. The product template (PT) domain catalyzes C4-C9 and C2-C11 aldol cyclizations and dehydrations to a trihydroxynaphthalene, which is thought to be delivered to the thioesterase (TE) domain for product release. The bifunctional enzyme elcB then methylates nor-toralactone to toralactone before conducting an unusual oxidative aromatic ring opening. The next step in perylenequinone biosynthesis is an O-methylation at the nascent OH-6 of the elcB product performed by the O-methyltransferase elcD. The oxidative coupling of the two monomeric naphthol units in perylenequinone biosynthesis is catalyzed by the FAD-dependent monooxygenase elcE and the multicopper oxidase elcG. ElcG might catalyze the first intermolecular coupling in a regio- and stereo-selective manner via a phenol radical coupling mechanism and the elcE could forge the second C-C bond intramolecularly via a hydride transfer mechanism. The fasciclin domain-containing protein elcF might also play a role duting this step. The last piece of the puzzle in the biosynthesis of elsinochrome C is the additional annulation by enolate coupling to afford the dihydrobenzo(ghi)perylenequinone system, catalyzed by the FAD-dependent monooxygenase elcH. The sequence is that of O-methyltransferase elcB from Phaeosphaeria nodorum (strain SN15 / ATCC MYA-4574 / FGSC 10173) (Glume blotch fungus).